The primary structure comprises 188 residues: Molybdopterin synthase catalytic subunit (188 aa).

A Phosphoserine modification is found at serine 20. Substrate is bound by residues 143–144 (HR), lysine 159, and 166–168 (KKE).

It belongs to the MoaE family. MOCS2B subfamily. In terms of assembly, heterotetramer; composed of 2 small (MOCS2A) and 2 large (MOCS2B) subunits. In terms of tissue distribution, highest levels are found in heart and skeletal muscle. Lower levels are present in brain, kidney and pancreas. Very low levels are found in lung and peripheral blood leukocytes.

Its subcellular location is the cytoplasm. It localises to the cytosol. It carries out the reaction 2 [molybdopterin-synthase sulfur-carrier protein]-C-terminal-Gly-aminoethanethioate + cyclic pyranopterin phosphate + H2O = molybdopterin + 2 [molybdopterin-synthase sulfur-carrier protein]-C-terminal Gly-Gly + 2 H(+). The protein operates within cofactor biosynthesis; molybdopterin biosynthesis. Its function is as follows. Catalytic subunit of the molybdopterin synthase complex, a complex that catalyzes the conversion of precursor Z into molybdopterin. Acts by mediating the incorporation of 2 sulfur atoms from thiocarboxylated MOCS2A into precursor Z to generate a dithiolene group. The protein is Molybdopterin synthase catalytic subunit of Homo sapiens (Human).